The sequence spans 309 residues: Succinate--CoA ligase [ADP-forming] subunit alpha-2, mitochondrial (309 aa).

The transit peptide at 1 to 9 directs the protein to the hydrogenosome; that stretch reads MLSSSFERN. Residues K54 and 107 to 109 contribute to the CoA site; that span reads ITE. Y171 contributes to the substrate binding site. H262 (tele-phosphohistidine intermediate) is an active-site residue.

It belongs to the succinate/malate CoA ligase alpha subunit family. As to quaternary structure, heterodimer of an alpha and a beta subunit.

It localises to the hydrogenosome lumen. It carries out the reaction succinate + ATP + CoA = succinyl-CoA + ADP + phosphate. Its pathway is carbohydrate metabolism; tricarboxylic acid cycle; succinate from succinyl-CoA (ligase route): step 1/1. In terms of biological role, succinyl-CoA synthetase functions in the citric acid cycle (TCA), coupling the hydrolysis of succinyl-CoA to the synthesis of ATP and thus represents the only step of substrate-level phosphorylation in the TCA. The alpha subunit of the enzyme binds the substrates coenzyme A and phosphate, while succinate binding and nucleotide specificity is provided by the beta subunit. This Trichomonas vaginalis protein is Succinate--CoA ligase [ADP-forming] subunit alpha-2, mitochondrial (ALPHA-SCS2).